Here is a 313-residue protein sequence, read N- to C-terminus: GTP cyclohydrolase MptA (313 aa).

The protein belongs to the GTP cyclohydrolase IV family. As to quaternary structure, homodimer. It depends on Fe(2+) as a cofactor.

The catalysed reaction is GTP + H2O = 7,8-dihydroneopterin 2',3'-cyclic phosphate + formate + diphosphate + H(+). Its pathway is cofactor biosynthesis; 5,6,7,8-tetrahydromethanopterin biosynthesis. Its activity is regulated as follows. Inhibited by GTP concentrations greater than 0.3 mM and by 2-amino-5-formylamino-6-ribofuranosylamino-4(3H)-pyrimidinone 5'-phosphate (fapyGMP). Partial inhibition is observed when 2 mM GMP, dGTP, or 7-methyl-GTP was included along with 2 mM GTP. Its function is as follows. Converts GTP to 7,8-dihydro-D-neopterin 2',3'-cyclic phosphate, the first intermediate in the biosynthesis of coenzyme methanopterin. It is also able to utilize a variety of GTP analogs as substrates, including GDP, beta,gamma-methylene-GTP and GTP-[gamma-thio]. The protein is GTP cyclohydrolase MptA (mptA) of Methanocaldococcus jannaschii (strain ATCC 43067 / DSM 2661 / JAL-1 / JCM 10045 / NBRC 100440) (Methanococcus jannaschii).